A 36-amino-acid chain; its full sequence is Pancreatic polypeptide (36 aa).

Tyrosine 36 is modified (tyrosine amide).

Belongs to the NPY family.

The protein localises to the secreted. Hormone secreted by pancreatic cells that acts as a regulator of pancreatic and gastrointestinal functions probably by signaling through the G protein-coupled receptor NPY4R2. This chain is Pancreatic polypeptide (PPY), found in Tapirus pinchaque (Mountain tapir).